Consider the following 126-residue polypeptide: Holo-[acyl-carrier-protein] synthase (126 aa).

Positions 9 and 58 each coordinate Mg(2+).

This sequence belongs to the P-Pant transferase superfamily. AcpS family. It depends on Mg(2+) as a cofactor.

It localises to the cytoplasm. It carries out the reaction apo-[ACP] + CoA = holo-[ACP] + adenosine 3',5'-bisphosphate + H(+). In terms of biological role, transfers the 4'-phosphopantetheine moiety from coenzyme A to a Ser of acyl-carrier-protein. The sequence is that of Holo-[acyl-carrier-protein] synthase from Citrobacter koseri (strain ATCC BAA-895 / CDC 4225-83 / SGSC4696).